Consider the following 300-residue polypeptide: Protein FANTASTIC FOUR 4 (300 aa).

Residues Pro-30–Ala-56 are compositionally biased toward polar residues. Disordered regions lie at residues Pro-30 to Ser-104, Thr-142 to Pro-170, and Thr-227 to Glu-264. Low complexity-rich tracts occupy residues Ser-58 to Ser-88 and Thr-142 to Thr-151. Residues Ser-166–Ile-217 enclose the FAF domain. A compositionally biased stretch (acidic residues) spans Lys-233 to Glu-262.

Belongs to the fantastic four family. Expressed in the shoot apex and young siliques. Detected in provascular and vascular tissue, but not in the vegetative meristem. In inflorescences, restricted to the base of the flower and to the vasculature of the stem and the pedicels, but absent from young flowers. Detected in the center of the inflorescence meristem.

Functionally, regulates the size of the shoot meristem by modulating the CLV3-WUS feedback loop. Can repress WUS but is under negative control by CLV3. The protein is Protein FANTASTIC FOUR 4 (FAF4) of Arabidopsis thaliana (Mouse-ear cress).